A 648-amino-acid polypeptide reads, in one-letter code: Calpain-5 (648 aa).

Positions 28–353 (PFVDTLFPPT…FTDISLCQLF (326 aa)) constitute a Calpain catalytic domain. Active-site residues include Cys-83, His-252, and Asn-290. Residues 354–509 (NTSVFSFSRS…VYSDEHIHFS (156 aa)) form a domain III region. One can recognise a C2 domain in the interval 502 to 625 (SDEHIHFSPL…ENRDTTLQLT (124 aa)).

Belongs to the peptidase C2 family. The cofactor is Ca(2+). As to expression, expressed in neuronal, but not in GABA-ergic neurons, intestinal, hypodermal and excretory tissues.

Functionally, required for the correct female sexual development of the soma and germline in hermaphrodite animals, while being fully dispensable in males. Has calcium-dependent proteolytic activity and is involved in the cleavage of tra-2, for which it acts as a potentiator. Capable of calcium-dependent autolysis. Part of the necrosis cell death pathway. Required for necrosis of intestinal cells induced by B.thuringiensis endotoxin Cry6Aa. The sequence is that of Calpain-5 from Caenorhabditis elegans.